Here is a 172-residue protein sequence, read N- to C-terminus: C-phycocyanin subunit beta (172 aa).

Asn72 bears the N4-methylasparagine mark. Cys82 and Cys153 together coordinate (2R,3E)-phycocyanobilin.

The protein belongs to the phycobiliprotein family. Heterodimer of an alpha and a beta subunit, which further assembles into trimers and the trimers into hexamers. Post-translationally, contains two covalently linked bilin chromophores. The chromophore on position 82 is added by the phycocyanobilin lyase CpcUS, while the chromophore on position 153 is added by the phycocyanobilin lyase CpcT.

The protein resides in the cellular thylakoid membrane. Functionally, light-harvesting photosynthetic bile pigment-protein from the phycobiliprotein complex (phycobilisome, PBS). Phycocyanin is the major phycobiliprotein in the PBS rod. The sequence is that of C-phycocyanin subunit beta (cpcB) from Picosynechococcus sp. (strain ATCC 27264 / PCC 7002 / PR-6) (Agmenellum quadruplicatum).